The sequence spans 535 residues: MSKHELKDKKRKSVDGEDVSKSKKVKKDKKDKKDKKAKDGNDKVKDKKDKNKKDKSKTDKNLKEVQETEAHTGSETAPVGDSTAAAGYVESKELASVPQADVDTFFSENEVAVEDPESLGFRPLLSFSHLNLHSAIQKEISKFPKPTPIQAVSWPYLLAGKDVIGVAETGSGKTFAFGVPAINSLMSEKSTPRGVKCLVISPTRELASQIYDNLVQLTDKVGLNCCCVYGGVQKDSQREQLKKAQVVVATPGRLLDLIEEGSAKLAGVQYLVLDEADRMLEKGFEEDIKRIIKETKSDVRQTLMFTATWPKEVRELASTFMRAPVKVSIGNRDELSANKRITQVVEVIDPFKKEKRLLELLKQYQSGAKKNDKVLIFALYKKEASRVERNLKYNGYNVAAIHGDLSQQQRTQALSEFKAGTANLLLATDVAARGLDIPNVKTVINLTFPLTVEDYVHRIGRTGRAGATGVAHTLFTEQEKHLAGALVNVLNGAGQPVPEELMKFGTHTKRKEHNAYGAFYKNVDLTKKAKKITFD.

Positions 1-21 (MSKHELKDKKRKSVDGEDVSK) are enriched in basic and acidic residues. Positions 1–82 (MSKHELKDKK…GSETAPVGDS (82 aa)) are disordered. Over residues 22-33 (SKKVKKDKKDKK) the composition is skewed to basic residues. Over residues 34–72 (DKKAKDGNDKVKDKKDKNKKDKSKTDKNLKEVQETEAHT) the composition is skewed to basic and acidic residues. Residues 125-151 (LSFSHLNLHSAIQKEISKFPKPTPIQA) carry the Q motif motif. The region spanning 154-327 (WPYLLAGKDV…STFMRAPVKV (174 aa)) is the Helicase ATP-binding domain. Residue 167 to 174 (AETGSGKT) coordinates ATP. The DEAD box motif lies at 274–277 (DEAD). Positions 352–505 (KKEKRLLELL…PVPEELMKFG (154 aa)) constitute a Helicase C-terminal domain.

Belongs to the DEAD box helicase family. DDX5/DBP2 subfamily.

The protein localises to the nucleus. Its subcellular location is the nucleolus. The catalysed reaction is ATP + H2O = ADP + phosphate + H(+). Functionally, ATP-dependent RNA helicase required for 60S ribosomal subunit synthesis. Involved in efficient pre-rRNA processing, predominantly at site A3, which is necessary for the normal formation of 25S and 5.8S rRNAs. The protein is ATP-dependent RNA helicase DBP3 (DBP3) of Eremothecium gossypii (strain ATCC 10895 / CBS 109.51 / FGSC 9923 / NRRL Y-1056) (Yeast).